The primary structure comprises 399 residues: Elongation factor Tu (399 aa).

The 195-residue stretch at 10 to 204 folds into the tr-type G domain; the sequence is KPHVNIGTIG…AVDASIPEPE (195 aa). The G1 stretch occupies residues 19 to 26; that stretch reads GHVDHGKT. 19–26 contributes to the GTP binding site; the sequence is GHVDHGKT. Thr26 serves as a coordination point for Mg(2+). A G2 region spans residues 60–64; it reads GITIN. Residues 81 to 84 are G3; it reads DCPG. GTP is bound by residues 81–85 and 136–139; these read DCPGH and NKCD. The G4 stretch occupies residues 136 to 139; the sequence is NKCD. The G5 stretch occupies residues 174–176; the sequence is SGL.

The protein belongs to the TRAFAC class translation factor GTPase superfamily. Classic translation factor GTPase family. EF-Tu/EF-1A subfamily. In terms of assembly, monomer.

Its subcellular location is the cytoplasm. The enzyme catalyses GTP + H2O = GDP + phosphate + H(+). Functionally, GTP hydrolase that promotes the GTP-dependent binding of aminoacyl-tRNA to the A-site of ribosomes during protein biosynthesis. The polypeptide is Elongation factor Tu (Prochlorococcus marinus (strain MIT 9312)).